The primary structure comprises 289 residues: Probable porphobilinogen deaminase (289 aa).

The residue at position 234 (Cys234) is an S-(dipyrrolylmethanemethyl)cysteine.

It belongs to the HMBS family. It depends on dipyrromethane as a cofactor.

The catalysed reaction is 4 porphobilinogen + H2O = hydroxymethylbilane + 4 NH4(+). It functions in the pathway porphyrin-containing compound metabolism; protoporphyrin-IX biosynthesis; coproporphyrinogen-III from 5-aminolevulinate: step 2/4. Its function is as follows. Tetrapolymerization of the monopyrrole PBG into the hydroxymethylbilane pre-uroporphyrinogen in several discrete steps. The protein is Probable porphobilinogen deaminase (hemC) of Archaeoglobus fulgidus (strain ATCC 49558 / DSM 4304 / JCM 9628 / NBRC 100126 / VC-16).